Reading from the N-terminus, the 147-residue chain is UPF0306 protein YhbP (147 aa).

It belongs to the UPF0306 family.

The chain is UPF0306 protein YhbP from Escherichia coli (strain K12 / MC4100 / BW2952).